The sequence spans 487 residues: L-tartrate/succinate antiporter (487 aa).

14 helical membrane-spanning segments follow: residues 10 to 30 (YLAP…AGLE), 33 to 53 (TWLY…EPVP), 54 to 74 (GAVV…WLLF), 93 to 113 (WAVF…FMFG), 137 to 157 (TLFL…VTPS), 189 to 209 (IGSY…AIFL), 236 to 256 (FLGM…LAYV), 292 to 312 (LMVG…AAMV), 313 to 333 (GYSV…DIVS), 340 to 360 (VFFW…TGFI), 370 to 390 (SLSG…FYLL), 393 to 413 (FFAS…AAAL), 418 to 438 (IPLP…SILT), and 465 to 485 (IFGL…MPVV).

This sequence belongs to the SLC13A/DASS transporter (TC 2.A.47) family. DIT1 subfamily.

It localises to the cell inner membrane. The enzyme catalyses (2R,3R)-tartrate(out) + succinate(in) = (2R,3R)-tartrate(in) + succinate(out). In terms of biological role, catalyzes the uptake of tartrate in exchange for intracellular succinate. Essential for anaerobic L-tartrate fermentation. The polypeptide is L-tartrate/succinate antiporter (ttdT) (Shigella boydii serotype 4 (strain Sb227)).